The following is a 130-amino-acid chain: Small ribosomal subunit protein uS11 (130 aa).

The span at 1–15 (MARPTKKSGPRKQKR) shows a compositional bias: basic residues. The tract at residues 1–21 (MARPTKKSGPRKQKRNVPSGV) is disordered.

Belongs to the universal ribosomal protein uS11 family. In terms of assembly, part of the 30S ribosomal subunit. Interacts with proteins S7 and S18. Binds to IF-3.

In terms of biological role, located on the platform of the 30S subunit, it bridges several disparate RNA helices of the 16S rRNA. Forms part of the Shine-Dalgarno cleft in the 70S ribosome. The chain is Small ribosomal subunit protein uS11 from Synechococcus elongatus (strain ATCC 33912 / PCC 7942 / FACHB-805) (Anacystis nidulans R2).